We begin with the raw amino-acid sequence, 69 residues long: Pleurain-A1 (69 aa).

Positions 1–18 (MFTLKKTLLLLFFLGTIS) are cleaved as a signal peptide. Positions 19 to 43 (ISLCKQERDADEDDGRKMTEEEVKR) are excised as a propeptide. Cys-63 and Cys-69 are disulfide-bonded.

In terms of tissue distribution, expressed by the skin glands.

Its subcellular location is the secreted. Antimicrobial peptide. Has activity against the Gram-positive bacterium S.aureus ATCC2592 (MIC=15 ug/ml), the Gram-negative bacteria E.coli ATCC25922 (MIC=60 ug/ml), B.dysenteriae (MIC=120 ug/ml), H.pylori NTCT11637 (MIC=30 ug/ml), and the fungus C.albicans ATCC2002 (MIC=30 ug/ml). Has little hemolytic activity on rabbit red blood cells. This chain is Pleurain-A1, found in Nidirana pleuraden (Yunnan pond frog).